Consider the following 140-residue polypeptide: Nucleoside diphosphate kinase (140 aa).

Positions 11, 59, 87, 93, 104, and 114 each coordinate ATP. The active-site Pros-phosphohistidine intermediate is His117.

This sequence belongs to the NDK family. Homotetramer. The cofactor is Mg(2+).

It is found in the cytoplasm. It carries out the reaction a 2'-deoxyribonucleoside 5'-diphosphate + ATP = a 2'-deoxyribonucleoside 5'-triphosphate + ADP. The enzyme catalyses a ribonucleoside 5'-diphosphate + ATP = a ribonucleoside 5'-triphosphate + ADP. Its function is as follows. Major role in the synthesis of nucleoside triphosphates other than ATP. The ATP gamma phosphate is transferred to the NDP beta phosphate via a ping-pong mechanism, using a phosphorylated active-site intermediate. The protein is Nucleoside diphosphate kinase of Methylobacterium radiotolerans (strain ATCC 27329 / DSM 1819 / JCM 2831 / NBRC 15690 / NCIMB 10815 / 0-1).